We begin with the raw amino-acid sequence, 1095 residues long: Putative disease resistance protein At4g11170 (1095 aa).

The TIR domain occupies 9-173 (WRYDVFPSFR…TISKDVLEKL (165 aa)). Residue glutamate 84 is part of the active site. The 287-residue stretch at 168 to 454 (DVLEKLNATP…HENYLKQMII (287 aa)) folds into the NB-ARC domain. 6 LRR repeats span residues 609–631 (CLVELNMSHSKLKKLWSGVQPLR), 632–654 (NLRTMNLNSSRNLEILPNLMEAT), 655–677 (KLNRLDLGWCESLVELPSSIKNL), 679–701 (HLILLEMSCCKKLEIIPTNINLP), 702–722 (SLEVLHFRYCTRLQTFPEIST), and 723–744 (NIRLLNLIGTAITEVPPSVKYW).

The enzyme catalyses NAD(+) + H2O = ADP-D-ribose + nicotinamide + H(+). This Arabidopsis thaliana (Mouse-ear cress) protein is Putative disease resistance protein At4g11170.